We begin with the raw amino-acid sequence, 230 residues long: UPF0758 protein ABC2615 (230 aa).

An MPN domain is found at 104 to 226 (VISSPEDAAE…FISLKERGFF (123 aa)). Zn(2+) contacts are provided by H175, H177, and D188. Positions 175–188 (HNHPSGDPSPSPED) match the JAMM motif motif.

This sequence belongs to the UPF0758 family.

The sequence is that of UPF0758 protein ABC2615 from Shouchella clausii (strain KSM-K16) (Alkalihalobacillus clausii).